Here is a 280-residue protein sequence, read N- to C-terminus: 4-hydroxy-tetrahydrodipicolinate reductase (280 aa).

NAD(+) contacts are provided by residues 14–19, Asp40, 106–108, and 130–133; these read GAAGRM, ATT, and APSM. The active-site Proton donor/acceptor is the His166. His167 is a (S)-2,3,4,5-tetrahydrodipicolinate binding site. Lys170 functions as the Proton donor in the catalytic mechanism. 176–177 is a (S)-2,3,4,5-tetrahydrodipicolinate binding site; the sequence is GT.

The protein belongs to the DapB family.

It localises to the cytoplasm. The enzyme catalyses (S)-2,3,4,5-tetrahydrodipicolinate + NAD(+) + H2O = (2S,4S)-4-hydroxy-2,3,4,5-tetrahydrodipicolinate + NADH + H(+). The catalysed reaction is (S)-2,3,4,5-tetrahydrodipicolinate + NADP(+) + H2O = (2S,4S)-4-hydroxy-2,3,4,5-tetrahydrodipicolinate + NADPH + H(+). Its pathway is amino-acid biosynthesis; L-lysine biosynthesis via DAP pathway; (S)-tetrahydrodipicolinate from L-aspartate: step 4/4. In terms of biological role, catalyzes the conversion of 4-hydroxy-tetrahydrodipicolinate (HTPA) to tetrahydrodipicolinate. This is 4-hydroxy-tetrahydrodipicolinate reductase from Rhodopirellula baltica (strain DSM 10527 / NCIMB 13988 / SH1).